Consider the following 2327-residue polypeptide: Acetyl-CoA carboxylase 2 (2327 aa).

Residues 1–62 are disordered; the sequence is MTSTHVATLG…NGGVSDSKKL (62 aa). In terms of domain architecture, Biotin carboxylation spans 134 to 641; the sequence is PIHSVLVANN…HTGWLDTRIA (508 aa). One can recognise an ATP-grasp domain in the interval 287-481; sequence ECCLDSIPDE…AAQVAVGMGI (195 aa). Position 313-370 (313-370) interacts with ATP; the sequence is CQVVGYPAMIKASWGGGGKGIRKVHNDDEVRTLFKQVQGEVPGSPIFIMRLAAQSRHL. The Mg(2+) site is built by Glu436, Glu450, and Asn452. Mn(2+)-binding residues include Glu436, Glu450, and Asn452. Arg454 is an active-site residue. The Biotinyl-binding domain occupies 768–842; the sequence is LQNDHDPSKL…QAGDLIARLD (75 aa). An N6-biotinyllysine modification is found at Lys809. The region spanning 1568–1909 is the CoA carboxyltransferase N-terminal domain; it reads PYQPLSVIDL…YIGGPLPVTT (342 aa). The carboxyltransferase stretch occupies residues 1568–2227; sequence PYQPLSVIDL…EDVLAKEIRA (660 aa). Arg1818, Lys2119, and Arg2121 together coordinate CoA. A CoA carboxyltransferase C-terminal domain is found at 1913–2227; it reads PPDRPVAYIP…EDVLAKEIRA (315 aa).

As to quaternary structure, homodimer. It depends on biotin as a cofactor. Mg(2+) is required as a cofactor. The cofactor is Mn(2+).

The protein localises to the cytoplasm. Its subcellular location is the cytosol. It carries out the reaction hydrogencarbonate + acetyl-CoA + ATP = malonyl-CoA + ADP + phosphate + H(+). The catalysed reaction is N(6)-biotinyl-L-lysyl-[protein] + hydrogencarbonate + ATP = N(6)-carboxybiotinyl-L-lysyl-[protein] + ADP + phosphate + H(+). The protein operates within lipid metabolism; malonyl-CoA biosynthesis; malonyl-CoA from acetyl-CoA: step 1/1. Multifunctional enzyme that catalyzes the carboxylation of acetyl-CoA, forming malonyl-CoA, which is used in the plastid for fatty acid synthesis and in the cytosol in various biosynthetic pathways including fatty acid elongation. The polypeptide is Acetyl-CoA carboxylase 2 (ACC2) (Oryza sativa subsp. japonica (Rice)).